Here is a 359-residue protein sequence, read N- to C-terminus: ELAV-like protein 2 (359 aa).

A disordered region spans residues 1 to 39; sequence METQLSNGPTCNNTANGPTTVNNNCSSPVDSGNTEDSKT. RRM domains follow at residues 39–117 and 125–205; these read TNLI…YARP and ANLY…FANN. At Ser-221 the chain carries Phosphoserine. The RRM 3 domain maps to 276 to 354; the sequence is WCIFVYNLAP…RVLQVSFKTN (79 aa).

The protein belongs to the RRM elav family. As to quaternary structure, interacts with IGF2BP1. Interacts with MAP1B light chain LC1.

Its function is as follows. RNA-binding protein that binds to the 3' untranslated region (3'UTR) of target mRNAs. Seems to recognize a GAAA motif. Can bind to its own 3'UTR, the FOS 3'UTR and the ID 3'UTR. The sequence is that of ELAV-like protein 2 (Elavl2) from Rattus norvegicus (Rat).